The sequence spans 1861 residues: Protein TANC1 (1861 aa).

N-acetylmethionine is present on Met-1. Disordered stretches follow at residues 1–46 (MLKA…SSLP), 63–99 (SLPSSPLLPRQSHLVQSRVNKKSPGPVRKPKYVESPR), 206–225 (KSPCETISSPSSTLESKDSG), 257–311 (QKGV…MPRP), and 439–486 (QIAS…ISAE). Basic and acidic residues predominate over residues 8–21 (KSREGGKGGKKEAG). 5 positions are modified to phosphoserine: Ser-63, Ser-66, Ser-67, Ser-207, and Ser-270. The span at 206–219 (KSPCETISSPSSTL) shows a compositional bias: polar residues. Residues 440-455 (IASNSPGSSPKTSDPT) show a composition bias toward polar residues. Low complexity predominate over residues 461–480 (TPLLSPSSSTSASSTAKTPL). Phosphoserine is present on Ser-465. ANK repeat units follow at residues 896-928 (EGLSAALASLRNLYTPNVKVSRLLILGGANVNY), 934-963 (NNAPILCVQSHLGHEEVVTLLLEFGACLDG), 967-996 (NGMTALCYAAAAGHMKLVCLLTKKGVRVDH), 1000-1029 (KGQCALVHSALRGHGDILQYLLTCEWSPGP), 1040-1069 (ALQQALTAAASMGHSSVVQCLLGMEKEHEV), 1078-1107 (WGETALTAAAGRGKLEVCELLLGHGAAVSR), 1111-1140 (RGVPPLFCAARQGHWQIVRLLLERGCDVNL), 1144-1173 (QGRTPLMVAACEGHLSTVEFLLSKGAALSS), 1177-1206 (EGLSALSWACLKGHRAVVQYLVEEGAAIDQ), 1210-1239 (NGRTPLDLAAFYGDAETVLYLVEKGAVIEH), and 1243-1272 (SGMRPLDRAIGCRNTSVVVALLRKGAKLGN). TPR repeat units follow at residues 1289–1322 (LQKLMEEGNVMYKKGKMKEAAQRYQYALRKFPRE), 1336–1369 (VSLYLNLSRCRRKTNDFGMAEEFASKALELKPKS), and 1371–1403 (EAFYARARAKRNSRQFVAALADLQEAVKLCPTN). The segment covering 1421–1431 (QRSQQQKQQGP) has biased composition (low complexity). Disordered stretches follow at residues 1421 to 1485 (QRSQ…SVPS) and 1636 to 1696 (VAVD…KVQG). A Phosphoserine modification is found at Ser-1439. Composition is skewed to low complexity over residues 1467 to 1485 (QEESVSPTPRSQPSSSVPS) and 1659 to 1689 (SLTSSGSSGSPSSSIKMSSSTSSLTSSSSFS). 3 positions are modified to phosphoserine: Ser-1668, Ser-1676, and Ser-1677.

The protein belongs to the TANC family. Interacts probably directly with DLG1, DLG4, HOMER1. Interacts with DLGAP1, INA, CAMK2A, GRIN2B and GRIA1. Interacts with TNIK. Interacts with MINK1. Phosphorylated; by MINK1 and TNIK upon stimulation by RAP2A.

Its subcellular location is the postsynaptic density. In terms of biological role, may be a scaffold component in the postsynaptic density. The protein is Protein TANC1 (TANC1) of Homo sapiens (Human).